The following is a 688-amino-acid chain: Elongation factor G (688 aa).

The region spanning 6-280 (KLFRNFGIMA…AVVDFLPSPI (275 aa)) is the tr-type G domain. Residues 15 to 22 (AHIDAGKT), 79 to 83 (DTPGH), and 133 to 136 (NKMD) each bind GTP.

The protein belongs to the TRAFAC class translation factor GTPase superfamily. Classic translation factor GTPase family. EF-G/EF-2 subfamily.

The protein resides in the cytoplasm. Catalyzes the GTP-dependent ribosomal translocation step during translation elongation. During this step, the ribosome changes from the pre-translocational (PRE) to the post-translocational (POST) state as the newly formed A-site-bound peptidyl-tRNA and P-site-bound deacylated tRNA move to the P and E sites, respectively. Catalyzes the coordinated movement of the two tRNA molecules, the mRNA and conformational changes in the ribosome. The chain is Elongation factor G from Ureaplasma urealyticum serovar 10 (strain ATCC 33699 / Western).